A 229-amino-acid polypeptide reads, in one-letter code: NAD-dependent protein deacylase (229 aa).

Positions Met-1 to Met-227 constitute a Deacetylase sirtuin-type domain. Gly-9 to Trp-28 is an NAD(+) binding site. Residues Tyr-53 and Arg-56 each coordinate substrate. NAD(+) is bound at residue Gln-86–Asp-89. His-104 (proton acceptor) is an active-site residue. Residue Gly-169–Ser-171 coordinates NAD(+).

This sequence belongs to the sirtuin family. Class III subfamily.

The protein resides in the cytoplasm. The catalysed reaction is N(6)-acetyl-L-lysyl-[protein] + NAD(+) + H2O = 2''-O-acetyl-ADP-D-ribose + nicotinamide + L-lysyl-[protein]. It carries out the reaction N(6)-succinyl-L-lysyl-[protein] + NAD(+) + H2O = 2''-O-succinyl-ADP-D-ribose + nicotinamide + L-lysyl-[protein]. Its function is as follows. NAD-dependent lysine deacetylase and desuccinylase that specifically removes acetyl and succinyl groups on target proteins. Modulates the activities of several proteins which are inactive in their acylated form. This Helicobacter pylori (strain ATCC 700392 / 26695) (Campylobacter pylori) protein is NAD-dependent protein deacylase.